The chain runs to 374 residues: 4-hydroxy-3-methylbut-2-en-1-yl diphosphate synthase (flavodoxin) (374 aa).

[4Fe-4S] cluster contacts are provided by Cys-270, Cys-273, Cys-305, and Glu-312.

The protein belongs to the IspG family. [4Fe-4S] cluster is required as a cofactor.

It catalyses the reaction (2E)-4-hydroxy-3-methylbut-2-enyl diphosphate + oxidized [flavodoxin] + H2O + 2 H(+) = 2-C-methyl-D-erythritol 2,4-cyclic diphosphate + reduced [flavodoxin]. It functions in the pathway isoprenoid biosynthesis; isopentenyl diphosphate biosynthesis via DXP pathway; isopentenyl diphosphate from 1-deoxy-D-xylulose 5-phosphate: step 5/6. In terms of biological role, converts 2C-methyl-D-erythritol 2,4-cyclodiphosphate (ME-2,4cPP) into 1-hydroxy-2-methyl-2-(E)-butenyl 4-diphosphate. In Yersinia enterocolitica serotype O:8 / biotype 1B (strain NCTC 13174 / 8081), this protein is 4-hydroxy-3-methylbut-2-en-1-yl diphosphate synthase (flavodoxin).